Consider the following 366-residue polypeptide: Zinc transporter ZIP13 (366 aa).

The Lumenal portion of the chain corresponds to 1–5; the sequence is MTKQK. A helical membrane pass occupies residues 6–26; that stretch reads LLLNGTFSLILIVACEAQQLP. The Cytoplasmic portion of the chain corresponds to 27–57; it reads RSHAASSSGPLCEKEAESWGNLLSSERLDAW. Residues 58–78 traverse the membrane as a helical segment; it reads ICSLIGSFMVGLSGIFPLLVI. Residues 79-97 lie on the Lumenal side of the membrane; the sequence is PFETGAALRSEAGSRRLKQ. The chain crosses the membrane as a helical span at residues 98-118; the sequence is LLSFAIGGLLGNVFLHLLPEA. Topologically, residues 119–137 are cytoplasmic; sequence WAYTCSAAAGEGQSFQQQK. The chain crosses the membrane as a helical span at residues 138–158; sequence LLGLWVIIGFLTFLALEKIFL. Topologically, residues 159–225 are lumenal; sequence EKEEEECPGV…NRIKISGYLN (67 aa). The disordered stretch occupies residues 183 to 205; it reads SGYPPSKVAGKSQRAEKNSTQCN. The helical transmembrane segment at 226-246 threads the bilayer; sequence LLANTIDNFTHGLAVAASFLV. At 247–282 the chain is on the cytoplasmic side; it reads SRKVGFLTTMAILLHEIPHEVGDFAILLRAGFDRWS. The XEXPHE-motif motif lies at 261-266; the sequence is HEIPHE. Residues 283–303 traverse the membrane as a helical segment; that stretch reads AAKMQLSTALGGIVGACFAIC. The Lumenal segment spans residues 304–313; sequence AQSPKGAGET. The helical transmembrane segment at 314 to 334 threads the bilayer; sequence VAWILPFTSGGFLYIALVNVV. Topologically, residues 335-343 are cytoplasmic; the sequence is PDLLEEKNP. Residues 344 to 364 form a helical membrane-spanning segment; the sequence is WNSLQQILLLCTGITVMVLLA. Topologically, residues 365 to 366 are lumenal; that stretch reads HN.

This sequence belongs to the ZIP transporter (TC 2.A.5) family. In terms of assembly, homodimer.

The protein resides in the golgi apparatus membrane. Its subcellular location is the cytoplasmic vesicle membrane. The protein localises to the endoplasmic reticulum membrane. The catalysed reaction is Zn(2+)(in) = Zn(2+)(out). Its function is as follows. Functions as a zinc transporter transporting Zn(2+) from the Golgi apparatus to the cytosol and thus influences the zinc level at least in areas of the cytosol. The chain is Zinc transporter ZIP13 from Gallus gallus (Chicken).